A 422-amino-acid chain; its full sequence is Dioxygenase str8 (422 aa).

Residues Cys73, Cys75, Cys78, and His119 each contribute to the Zn(2+) site. Fe cation contacts are provided by His243, Asp245, and His382.

It belongs to the gamma-BBH/TMLD family. The cofactor is Fe(2+).

The protein operates within mycotoxin biosynthesis. In terms of biological role, dioxygenase; part of the gene cluster that mediates the biosynthesis of strobilurin A, an antifungal polyketide that contains a key beta-methoxyacrylate toxophore that targets the complex III of the mitochondrial electron transport chain. Strobilurin biosynthesis begins with construction of benzoyl CoA by step-wise elimination of ammonia from phenylalanine by the phenylalanine ammonia-lyase str11, oxygenation by str8 and retro-Claisen reaction to form benzoic acid, which is activated to its CoA thiolester benzoyl CoA by the dedicated CoA ligase str10. Benzoyl CoA forms the starter unit for the highly reducing polyketide synthase stpks1 that produces the polyketide prestrobilutin A. The FAD-dependent oxygenase str9 then catalyzes the key oxidative rearrangement responsible for the creation of the beta-methoxyacrylate toxophore. Str9 performs epoxidation of the 2,3 olefin of prestrobilutin A, followed by Meinwald rearrangement to furnish the aldehyde intermediate. Rapid enolization of the aldehyde intermediate would give the beta-methoxyacrylate skeleton and methylations catalyzed by str2 and str3 complete the synthesis and lead to the production of strobilurin A. The short-chain dehydrogenase stl2 and the dehydrogenase str4 play a role in the shunt pathway leading to the production of bolineol. The cluster encodes no obvious halogenase gene that could be involved in production of strobilurin B, nor any obvious dimethylallyl-transferase that could be involved in the production of strobilurin G. It is possible that unknown proteins encoded in, or near, the cluster (such as str1 or stl1) may form new classes of halogenases or dimethylally-transferases, or that the responsible genes are located elsewhere on the genome. Similarly, proteins encoded by str5/str6 hydrolases appear to have no chemical role in the biosynthesis of strobilurin A. Finally, no obvious self-resistance gene is found within the cluster. The protein is Dioxygenase str8 of Strobilurus tenacellus.